The chain runs to 239 residues: Small ribosomal subunit protein uS3 (239 aa).

The KH type-2 domain maps to 39–107 (IRAALMKTLK…EVLINIVEVR (69 aa)). A disordered region spans residues 214–239 (AQDKKMAEQDHGGGGGDRRRRDRDAA).

Belongs to the universal ribosomal protein uS3 family. In terms of assembly, part of the 30S ribosomal subunit. Forms a tight complex with proteins S10 and S14.

Functionally, binds the lower part of the 30S subunit head. Binds mRNA in the 70S ribosome, positioning it for translation. The polypeptide is Small ribosomal subunit protein uS3 (Methylocella silvestris (strain DSM 15510 / CIP 108128 / LMG 27833 / NCIMB 13906 / BL2)).